A 165-amino-acid polypeptide reads, in one-letter code: Transcription antitermination protein NusB (165 aa).

The disordered stretch occupies residues 1-27 (MISDDTDQFNPRDAKSPEAAKGKSAKR). Over residues 10–21 (NPRDAKSPEAAK) the composition is skewed to basic and acidic residues.

Belongs to the NusB family.

Its function is as follows. Involved in transcription antitermination. Required for transcription of ribosomal RNA (rRNA) genes. Binds specifically to the boxA antiterminator sequence of the ribosomal RNA (rrn) operons. The protein is Transcription antitermination protein NusB of Pseudomonas savastanoi pv. phaseolicola (strain 1448A / Race 6) (Pseudomonas syringae pv. phaseolicola (strain 1448A / Race 6)).